We begin with the raw amino-acid sequence, 185 residues long: Large ribosomal subunit protein uL5 (185 aa).

Belongs to the universal ribosomal protein uL5 family. As to quaternary structure, part of the 50S ribosomal subunit; part of the 5S rRNA/L5/L18/L25 subcomplex. Contacts the 5S rRNA and the P site tRNA. Forms a bridge to the 30S subunit in the 70S ribosome.

This is one of the proteins that bind and probably mediate the attachment of the 5S RNA into the large ribosomal subunit, where it forms part of the central protuberance. In the 70S ribosome it contacts protein S13 of the 30S subunit (bridge B1b), connecting the 2 subunits; this bridge is implicated in subunit movement. Contacts the P site tRNA; the 5S rRNA and some of its associated proteins might help stabilize positioning of ribosome-bound tRNAs. This chain is Large ribosomal subunit protein uL5, found in Afipia carboxidovorans (strain ATCC 49405 / DSM 1227 / KCTC 32145 / OM5) (Oligotropha carboxidovorans).